A 257-amino-acid polypeptide reads, in one-letter code: Diphthine synthase (257 aa).

Residues L9, D85, V88, 113–114, L164, A209, and H234 each bind S-adenosyl-L-methionine; that span reads SI.

The protein belongs to the diphthine synthase family. In terms of assembly, homodimer.

The enzyme catalyses 2-[(3S)-amino-3-carboxypropyl]-L-histidyl-[translation elongation factor 2] + 3 S-adenosyl-L-methionine = diphthine-[translation elongation factor 2] + 3 S-adenosyl-L-homocysteine + 3 H(+). The protein operates within protein modification; peptidyl-diphthamide biosynthesis. In terms of biological role, S-adenosyl-L-methionine-dependent methyltransferase that catalyzes the trimethylation of the amino group of the modified target histidine residue in translation elongation factor 2 (EF-2), to form an intermediate called diphthine. The three successive methylation reactions represent the second step of diphthamide biosynthesis. In Methanocaldococcus jannaschii (strain ATCC 43067 / DSM 2661 / JAL-1 / JCM 10045 / NBRC 100440) (Methanococcus jannaschii), this protein is Diphthine synthase.